The following is a 102-amino-acid chain: Large ribosomal subunit protein bL21 (102 aa).

Belongs to the bacterial ribosomal protein bL21 family. As to quaternary structure, part of the 50S ribosomal subunit. Contacts protein L20.

In terms of biological role, this protein binds to 23S rRNA in the presence of protein L20. The sequence is that of Large ribosomal subunit protein bL21 from Pediococcus pentosaceus (strain ATCC 25745 / CCUG 21536 / LMG 10740 / 183-1w).